The primary structure comprises 446 residues: Exodeoxyribonuclease 7 large subunit (446 aa).

Belongs to the XseA family. In terms of assembly, heterooligomer composed of large and small subunits.

The protein localises to the cytoplasm. The enzyme catalyses Exonucleolytic cleavage in either 5'- to 3'- or 3'- to 5'-direction to yield nucleoside 5'-phosphates.. In terms of biological role, bidirectionally degrades single-stranded DNA into large acid-insoluble oligonucleotides, which are then degraded further into small acid-soluble oligonucleotides. This is Exodeoxyribonuclease 7 large subunit from Streptococcus pneumoniae serotype 4 (strain ATCC BAA-334 / TIGR4).